Here is a 167-residue protein sequence, read N- to C-terminus: Small ribosomal subunit protein uS5 (167 aa).

Residues 12–75 (LQEKLIAVNR…EKARRSMVTI (64 aa)) form the S5 DRBM domain.

It belongs to the universal ribosomal protein uS5 family. Part of the 30S ribosomal subunit. Contacts proteins S4 and S8.

Its function is as follows. With S4 and S12 plays an important role in translational accuracy. Functionally, located at the back of the 30S subunit body where it stabilizes the conformation of the head with respect to the body. In Vibrio cholerae serotype O1 (strain ATCC 39541 / Classical Ogawa 395 / O395), this protein is Small ribosomal subunit protein uS5.